The primary structure comprises 304 residues: Carbonic anhydrase 5A, mitochondrial (304 aa).

The N-terminal 34 residues, 1-34, are a transit peptide targeting the mitochondrion; sequence MLRAKMLGRGPYKPLAILRHMGPLCATRPQHWRF. The 261-residue stretch at 35–295 folds into the Alpha-carbonic anhydrase domain; the sequence is QHSYAEKHSN…LRGRNVRSSF (261 aa). Zn(2+)-binding residues include histidine 129, histidine 131, and histidine 154.

This sequence belongs to the alpha-carbonic anhydrase family. Zn(2+) is required as a cofactor. As to expression, high in liver, also detected in heart, lung, kidney, spleen and intestine.

It localises to the mitochondrion. It catalyses the reaction hydrogencarbonate + H(+) = CO2 + H2O. Its function is as follows. Mitochondrial carbonic anhydrase that catalyzes the reversible conversion of carbon dioxide to bicarbonate/HCO3. Mitochondria are impermeable to HCO3, and thus this intramitochondrial carbonic anhydrase is pivotal in providing HCO3 for multiple mitochondrial enzymes that catalyze the formation of essential metabolites of intermediary metabolism in the urea and Krebs cycles. This chain is Carbonic anhydrase 5A, mitochondrial, found in Rattus norvegicus (Rat).